A 614-amino-acid polypeptide reads, in one-letter code: UvrABC system protein C (614 aa).

Residues 12-91 (ESPGVYLMKG…IKKHRPRYNL (80 aa)) enclose the GIY-YIG domain. One can recognise a UVR domain in the interval 201-236 (RDLLKTYRERMASAAANERYEEAARYRDLIRAIEVT).

Belongs to the UvrC family. In terms of assembly, interacts with UvrB in an incision complex.

The protein resides in the cytoplasm. In terms of biological role, the UvrABC repair system catalyzes the recognition and processing of DNA lesions. UvrC both incises the 5' and 3' sides of the lesion. The N-terminal half is responsible for the 3' incision and the C-terminal half is responsible for the 5' incision. This chain is UvrABC system protein C, found in Geobacter metallireducens (strain ATCC 53774 / DSM 7210 / GS-15).